A 145-amino-acid chain; its full sequence is Protein SprT-like (145 aa).

In terms of domain architecture, SprT-like spans 4 to 140; the sequence is TNYVQEVSLA…VCGNCHGKLI (137 aa). His64 serves as a coordination point for Zn(2+). Glu65 is an active-site residue. His68 serves as a coordination point for Zn(2+).

Belongs to the SprT family. Zn(2+) serves as cofactor.

Its subcellular location is the cytoplasm. The sequence is that of Protein SprT-like from Streptococcus pyogenes serotype M6 (strain ATCC BAA-946 / MGAS10394).